We begin with the raw amino-acid sequence, 109 residues long: Phosphoribosyl-ATP pyrophosphatase (109 aa).

Belongs to the PRA-PH family.

The protein localises to the cytoplasm. It carries out the reaction 1-(5-phospho-beta-D-ribosyl)-ATP + H2O = 1-(5-phospho-beta-D-ribosyl)-5'-AMP + diphosphate + H(+). The protein operates within amino-acid biosynthesis; L-histidine biosynthesis; L-histidine from 5-phospho-alpha-D-ribose 1-diphosphate: step 2/9. The protein is Phosphoribosyl-ATP pyrophosphatase of Sphingopyxis alaskensis (strain DSM 13593 / LMG 18877 / RB2256) (Sphingomonas alaskensis).